A 1393-amino-acid polypeptide reads, in one-letter code: DNA-directed RNA polymerase subunit beta' (1393 aa).

Residues Cys-70, Cys-72, Cys-85, and Cys-88 each contribute to the Zn(2+) site. Mg(2+)-binding residues include Asp-461, Asp-463, and Asp-465. Zn(2+) is bound by residues Cys-804, Cys-877, Cys-884, and Cys-887.

It belongs to the RNA polymerase beta' chain family. As to quaternary structure, the RNAP catalytic core consists of 2 alpha, 1 beta, 1 beta' and 1 omega subunit. When a sigma factor is associated with the core the holoenzyme is formed, which can initiate transcription. It depends on Mg(2+) as a cofactor. Zn(2+) is required as a cofactor.

The enzyme catalyses RNA(n) + a ribonucleoside 5'-triphosphate = RNA(n+1) + diphosphate. Functionally, DNA-dependent RNA polymerase catalyzes the transcription of DNA into RNA using the four ribonucleoside triphosphates as substrates. This Rhodospirillum rubrum (strain ATCC 11170 / ATH 1.1.1 / DSM 467 / LMG 4362 / NCIMB 8255 / S1) protein is DNA-directed RNA polymerase subunit beta'.